The chain runs to 440 residues: 5-hydroxytryptamine receptor 6 (440 aa).

Residues 1–27 (MVPEPGPSANSTPAWGAGPPSAPGGSG) are Extracellular-facing. A helical membrane pass occupies residues 28–52 (WVAAALCVVIALTAAANSLLIALIC). The Cytoplasmic segment spans residues 53–62 (TQPALRNTSN). The helical transmembrane segment at 63–88 (FFLVSLFTSDLMVGLVVMPPAMLNAL) threads the bilayer. Residues 89–96 (YGRWVLAR) lie on the Extracellular side of the membrane. The chain crosses the membrane as a helical span at residues 97-122 (GLCLLWTAFDVMCCSASILNLCLISL). An intrachain disulfide couples cysteine 99 to cysteine 180. Aspartate 106 serves as a coordination point for serotonin. Over 123–142 (DRYLLILSPLRYKLRMTPPR) the chain is Cytoplasmic. Residues 143-167 (ALALVLGAWSLAALASFLPLLLGWH) traverse the membrane as a helical segment. Residues 168 to 185 (ELGHARPPVPGQCRLLAS) are Extracellular-facing. A helical membrane pass occupies residues 186-209 (LPFVLVASGLTFFLPSGAICFTYC). The Cytoplasmic segment spans residues 210–266 (RILLAARKQAVQVASLTTGMASQASETLQVPRTPRPGVESADSRRLATKHSRKALKA). The chain crosses the membrane as a helical span at residues 267-293 (SLTLGILLGMFFVTWLPFFVANIVQAV). Asparagine 288 contributes to the serotonin binding site. Over 294–299 (CDCISP) the chain is Extracellular. The chain crosses the membrane as a helical span at residues 300-323 (GLFDVLTWLGYCNSTMNPIIYPLF). Residues 324-440 (MRDFKRALGR…RPHPLGIPTN (117 aa)) lie on the Cytoplasmic side of the membrane. The segment at 346–392 (ASLASPSLRTSHSGPRPGLSLQQVLPLPLPPDSDSDSDAGSGGSSGL) is disordered. Residues 347–358 (SLASPSLRTSHS) are compositionally biased toward polar residues. The span at 362 to 371 (PGLSLQQVLP) shows a compositional bias: low complexity.

It belongs to the G-protein coupled receptor 1 family. In terms of assembly, interacts with MTOR, RPTOR and NF1. Interacts with CDK5.

Its subcellular location is the cell membrane. Functionally, G-protein coupled receptor for 5-hydroxytryptamine (serotonin), a biogenic hormone that functions as a neurotransmitter, a hormone and a mitogen. Also has a high affinity for tricyclic psychotropic drugs. Ligand binding causes a conformation change that triggers signaling via guanine nucleotide-binding proteins (G proteins) and modulates the activity of downstream effectors. HTR6 is coupled to G(s) G alpha proteins and mediates activation of adenylate cyclase activity. Controls pyramidal neurons migration during corticogenesis, through the regulation of CDK5 activity. Is an activator of mTOR signaling. The sequence is that of 5-hydroxytryptamine receptor 6 (HTR6) from Pan troglodytes (Chimpanzee).